Here is a 284-residue protein sequence, read N- to C-terminus: NAD kinase (284 aa).

Aspartate 61 acts as the Proton acceptor in catalysis. NAD(+)-binding positions include 61 to 62 (DG), arginine 66, 136 to 137 (ND), arginine 147, lysine 164, aspartate 166, and leucine 201.

Belongs to the NAD kinase family. A divalent metal cation serves as cofactor.

It localises to the cytoplasm. It catalyses the reaction NAD(+) + ATP = ADP + NADP(+) + H(+). Functionally, involved in the regulation of the intracellular balance of NAD and NADP, and is a key enzyme in the biosynthesis of NADP. Catalyzes specifically the phosphorylation on 2'-hydroxyl of the adenosine moiety of NAD to yield NADP. The sequence is that of NAD kinase from Dehalococcoides mccartyi (strain ATCC BAA-2100 / JCM 16839 / KCTC 5957 / BAV1).